Reading from the N-terminus, the 1083-residue chain is Ubiquitin carboxyl-terminal hydrolase 1 (1083 aa).

The segment at 30-165 (RSCVHFDKYV…KKDLLLEVVK (136 aa)) adopts a UBP-type zinc-finger fold. Zn(2+) is bound by residues cysteine 32, histidine 34, cysteine 56, cysteine 59, cysteine 95, cysteine 98, cysteine 103, histidine 115, histidine 119, histidine 125, cysteine 139, and cysteine 142. Positions 202–1083 (RGLVNLGNTC…EAYILFYERI (882 aa)) constitute a USP domain. Cysteine 211 acts as the Nucleophile in catalysis. 2 disordered regions span residues 387-424 (KDSE…DNET) and 450-486 (GSTE…ASGI). Composition is skewed to basic and acidic residues over residues 409-419 (SDHKIQSRPET) and 455-473 (LMHD…EDVR). A compositionally biased stretch (polar residues) spans 474 to 485 (ATQSNEETSASG). The Proton acceptor role is filled by histidine 1029.

It belongs to the peptidase C19 family.

The enzyme catalyses Thiol-dependent hydrolysis of ester, thioester, amide, peptide and isopeptide bonds formed by the C-terminal Gly of ubiquitin (a 76-residue protein attached to proteins as an intracellular targeting signal).. Its function is as follows. Recognizes and hydrolyzes the peptide bond at the C-terminal Gly of ubiquitin. Involved in the processing of poly-ubiquitin precursors as well as that of ubiquitinated proteins. Is involved in resistance to the arginine analog canavanine (CAN). This is Ubiquitin carboxyl-terminal hydrolase 1 (UBP1) from Arabidopsis thaliana (Mouse-ear cress).